We begin with the raw amino-acid sequence, 575 residues long: Chaperonin 60 subunit alpha 2, chloroplastic (575 aa).

The span at 1–18 (MFAVSPSSFSPTTISPRR) shows a compositional bias: low complexity. The disordered stretch occupies residues 1 to 27 (MFAVSPSSFSPTTISPRRSGQRNEPRK). The transit peptide at 1 to 32 (MFAVSPSSFSPTTISPRRSGQRNEPRKFSVVR) directs the protein to the chloroplast.

This sequence belongs to the chaperonin (HSP60) family. In terms of assembly, part of the Cpn60 complex composed of 7 alpha and 7 beta subunits.

The protein resides in the plastid. Its subcellular location is the chloroplast. Involved in protein assisted folding. The polypeptide is Chaperonin 60 subunit alpha 2, chloroplastic (CPN60A2) (Arabidopsis thaliana (Mouse-ear cress)).